The following is a 1178-amino-acid chain: Pyruvate carboxylase 1 (1178 aa).

Positions 18–470 (EKNKILVANR…WTTFIDDTPQ (453 aa)) constitute a Biotin carboxylation domain. Positions 136, 220, and 255 each coordinate ATP. The ATP-grasp domain maps to 140–337 (RNLAAKANVP…IVAAQIQIAA (198 aa)). Arginine 312 is a catalytic residue. Positions 557–824 (TLLMDTTWRD…DTGINVEHVR (268 aa)) constitute a Pyruvate carboxyltransferase domain. Substrate is bound by residues 565-569 (RDAHQ) and arginine 638. Aspartate 566 contributes to the a divalent metal cation binding site. Positions 734, 764, and 766 each coordinate a divalent metal cation. Lysine 734 is modified (N6-carboxylysine). Threonine 898 contacts substrate. The Biotinyl-binding domain maps to 1094–1169 (KADMHDPLHI…DSSDLLVLLE (76 aa)). Lysine 1135 carries the N6-biotinyllysine modification.

Homotetramer. The cofactor is biotin. Requires Zn(2+) as cofactor.

It localises to the cytoplasm. It catalyses the reaction hydrogencarbonate + pyruvate + ATP = oxaloacetate + ADP + phosphate + H(+). It participates in carbohydrate biosynthesis; gluconeogenesis. In terms of biological role, pyruvate carboxylase catalyzes a 2-step reaction, involving the ATP-dependent carboxylation of the covalently attached biotin in the first step and the transfer of the carboxyl group to pyruvate in the second. The chain is Pyruvate carboxylase 1 (PYC1) from Saccharomyces cerevisiae (strain ATCC 204508 / S288c) (Baker's yeast).